The chain runs to 321 residues: Polygalacturonan/rhamnogalacturonan transport system permease protein YteP (321 aa).

One can recognise an ABC transmembrane type-1 domain in the interval 1–144 (MKTAEAQAPA…YIPHFMSWVI (144 aa)). Transmembrane regions (helical) follow at residues 21 to 41 (RKRL…ILPG), 63 to 83 (YQPF…FIRL), and 123 to 143 (IALF…MSWV).

Belongs to the binding-protein-dependent transport system permease family. As to quaternary structure, the complex is probably composed of two ATP-binding proteins (MsmX), two transmembrane proteins (YtcP and YteP) and a solute-binding protein (YtcQ).

The protein localises to the cell membrane. Involved in pectin degradation. Part of the ABC transporter complex YtcQP-YteP involved in the uptake of polygalacturonan and rhamnogalacturonan type I. Responsible for the translocation of the substrate across the membrane. The sequence is that of Polygalacturonan/rhamnogalacturonan transport system permease protein YteP (yteP) from Bacillus subtilis (strain 168).